The primary structure comprises 440 residues: MIGRISRFMTRFVSRWLPDPLIFAMLLTLLTFVIALWLTPQTPISMVKMWGDGFWNLLAFGMQMALIIVTGHALASSAPVKSLLRTAASAAKTPVQGVMLVTFFGSVACVINWGFGLVVGAMFAREVARRVPGSDYPLLIACAYIGFLTWGGGFSGSMPLLAATPGNPVEHIAGLIPVGDTLFSGFNIFITVALIVVMPFITRMMMPKPSDVVSIDPKLLMEEADFQKQLPKDAPPSERLEESRILTLIIGALGIAYLAMYFSEHGFNITINTVNLMFMIAGLLLHKTPMAYMRAISAAARSTAGILVQFPFYAGIQLMMEHSGLGGLITEFFINVANKDTFPVMTFFSSALINFAVPSGGGHWVIQGPFVIPAAQALGADLGKSVMAIAYGEQWMNMAQPFWALPALAIAGLGVRDIMGYCITALLFSGVIFVIGLTLF.

Topologically, residues 1–19 are periplasmic; sequence MIGRISRFMTRFVSRWLPD. Residues 20–40 form a helical membrane-spanning segment; that stretch reads PLIFAMLLTLLTFVIALWLTP. The Cytoplasmic segment spans residues 41–53; sequence QTPISMVKMWGDG. Residues 54-74 form a helical membrane-spanning segment; that stretch reads FWNLLAFGMQMALIIVTGHAL. Topologically, residues 75–102 are periplasmic; it reads ASSAPVKSLLRTAASAAKTPVQGVMLVT. The helical transmembrane segment at 103-123 threads the bilayer; that stretch reads FFGSVACVINWGFGLVVGAMF. Over 124–137 the chain is Cytoplasmic; sequence AREVARRVPGSDYP. 2 helical membrane-spanning segments follow: residues 138 to 158 and 159 to 179; these read LLIACAYIGFLTWGGGFSGSM and PLLAATPGNPVEHIAGLIPVG. A topological domain (cytoplasmic) is located at residue D180. A helical transmembrane segment spans residues 181–201; the sequence is TLFSGFNIFITVALIVVMPFI. Topologically, residues 202–244 are periplasmic; it reads TRMMMPKPSDVVSIDPKLLMEEADFQKQLPKDAPPSERLEESR. 2 helical membrane-spanning segments follow: residues 245–265 and 266–286; these read ILTLIIGALGIAYLAMYFSEH and GFNITINTVNLMFMIAGLLLH. Residues 287 to 313 are Periplasmic-facing; it reads KTPMAYMRAISAAARSTAGILVQFPFY. The helical transmembrane segment at 314-334 threads the bilayer; sequence AGIQLMMEHSGLGGLITEFFI. Topologically, residues 335-351 are cytoplasmic; the sequence is NVANKDTFPVMTFFSSA. The chain crosses the membrane as a helical span at residues 352–372; that stretch reads LINFAVPSGGGHWVIQGPFVI. Over 373–394 the chain is Periplasmic; the sequence is PAAQALGADLGKSVMAIAYGEQ. A helical membrane pass occupies residues 395–415; that stretch reads WMNMAQPFWALPALAIAGLGV. Over 416–419 the chain is Cytoplasmic; the sequence is RDIM. Residues 420-440 form a helical membrane-spanning segment; that stretch reads GYCITALLFSGVIFVIGLTLF.

It localises to the cell inner membrane. Its function is as follows. May be responsible for the uptake of short-chain fatty acids. The chain is Putative short-chain fatty acid transporter (atoE) from Escherichia coli (strain K12).